The primary structure comprises 438 residues: tRNA(Ile)-lysidine synthase (438 aa).

An ATP-binding site is contributed by 26–31; sequence SGGADS.

Belongs to the tRNA(Ile)-lysidine synthase family.

The protein localises to the cytoplasm. The catalysed reaction is cytidine(34) in tRNA(Ile2) + L-lysine + ATP = lysidine(34) in tRNA(Ile2) + AMP + diphosphate + H(+). Ligates lysine onto the cytidine present at position 34 of the AUA codon-specific tRNA(Ile) that contains the anticodon CAU, in an ATP-dependent manner. Cytidine is converted to lysidine, thus changing the amino acid specificity of the tRNA from methionine to isoleucine. This Parabacteroides distasonis (strain ATCC 8503 / DSM 20701 / CIP 104284 / JCM 5825 / NCTC 11152) protein is tRNA(Ile)-lysidine synthase.